Consider the following 538-residue polypeptide: Cytochrome P450 734A4 (538 aa).

A helical membrane pass occupies residues 5 to 27 (VAVAAAVLLLLHVAARVADAVWW). Cys-480 serves as a coordination point for heme.

The protein belongs to the cytochrome P450 family. Requires heme as cofactor. In terms of tissue distribution, expressed in roots, shoot apex, leaf sheaths, leaf blades, internodes and panicles.

It localises to the membrane. Functionally, cytochrome P450 involved in brassinosteroids (BRs) inactivation and regulation of BRs homeostasis. Is a multifunctional and multisubstrate enzyme that controls the endogenous bioactive BR content both by direct inactivation of castasterone (CS) and by decreasing the levels of BR precursors. Catalyzes the oxidation of carbon 22 hydroxylated BR intermediates to produce C26 oxidized metabolites. The polypeptide is Cytochrome P450 734A4 (CYP734A4) (Oryza sativa subsp. japonica (Rice)).